We begin with the raw amino-acid sequence, 844 residues long: MFDTLFKSIFGSSNDRYIKRCRTRVEAINALEPQMQALADEDFPARIAEYREQAQNGRSLDDLLPEVFALTREAGKRALNMRHFDVQLVGGMVLHEGRIAEMKTGEGKTLVATLPVVLNAISGLGVHVVTVNDYLAKRDAAWMGRLYNFLGLSVGVIVHGLSDEERKEAYGADITYGTNNEFGFDYLRDNMKFYPHQLVQREHNFAIVDEVDSILIDEARTPLIISGPSEDSTGLYRRVDDIIPKLSPEAHFSVDEKARTATLTDEGVAKCEELLGIDNLFDPGNITFQHHVLQALKAHHVFRRDVDYIVTPEDQVVIVDEFTGRLMPGRRFSDGLHQALEAKEKVKVEAENQTLASITFQNYFRMYKKLAGMTGTADTEAVEFQQIYGLQVITIPTNKPMVRKDYPDSIYRTRREKFEAIVAAIGELHKSGQPVLVGTISIETSELLSAMLKKTGVPHNVLNAKHHEQEAEIVAQAGQRGKVTIATNMAGRGTDIVLGEGVRESGGLHILGTERHESRRIDNQLRGRSGRQGDPGSSRFYLSLEDDLMRLFGSDRISGLMQKLGMEEGEPIENRMVSRAIENAQKRVEGHNFEIRKTLLDYDNVMNQQREVIYTLRRETMMEADLEETAVEFMDDLFDEIYGDAEQGKGSEGDDAKAYAMARLRDVFNITRVLPLTDGQLPDRETARGAVLSILDELKRDTGEVYRDILRFFLLEEVDRCWKEHLLNMDHLRDGIGLRGYGQRDPKQEYKREGFSLFQEMLFRVRENLFRALTRLRIQREEQAPPEELKQEFKHKEEPKSLNYSGAQKETPSAAPERRGEPKVGRNDPCPCGSGQKYKKCCGA.

Residues Gln87, Gly105–Thr109, and Asp495 contribute to the ATP site. Basic and acidic residues predominate over residues Gln783–Lys800. The interval Gln783–Ala844 is disordered. Residues Leu802–Thr811 show a composition bias toward polar residues. Residues Pro816 to Arg826 are compositionally biased toward basic and acidic residues. Residues Cys830, Cys832, Cys841, and Cys842 each contribute to the Zn(2+) site.

The protein belongs to the SecA family. In terms of assembly, monomer and homodimer. Part of the essential Sec protein translocation apparatus which comprises SecA, SecYEG and auxiliary proteins SecDF-YajC and YidC. Zn(2+) serves as cofactor.

The protein resides in the cell inner membrane. It localises to the cytoplasm. It catalyses the reaction ATP + H2O + cellular proteinSide 1 = ADP + phosphate + cellular proteinSide 2.. In terms of biological role, part of the Sec protein translocase complex. Interacts with the SecYEG preprotein conducting channel. Has a central role in coupling the hydrolysis of ATP to the transfer of proteins into and across the cell membrane, serving as an ATP-driven molecular motor driving the stepwise translocation of polypeptide chains across the membrane. The sequence is that of Protein translocase subunit SecA from Nitratidesulfovibrio vulgaris (strain DSM 19637 / Miyazaki F) (Desulfovibrio vulgaris).